The chain runs to 657 residues: Zinc finger protein 630 (657 aa).

In terms of domain architecture, KRAB spans 8–79 (VTFEDVAVDF…ESELSRWIYP (72 aa)). 2 C2H2-type zinc fingers span residues 263–285 (NVCSMCGKAFIKKSQLIIHQRIH) and 291–313 (YVCGDCRKAFSEKSHLIVHQRIH). The C2H2-type 3; degenerate zinc-finger motif lies at 319–341 (YECTKYGRAFSRKSPFTVHQRVH). 9 C2H2-type zinc fingers span residues 347–369 (YECFECPKAFSQKSHLIIHQRVH), 375–397 (FECSECRKAFCEMSHLFIHQITH), 403–425 (YECTECGKTFPRKTQLIIHQRTH), 431–453 (YKCGECGKTFCQQSHLIGHQRIH), 459–481 (YVCTDCGKAFSQKSHLTGHQRLH), 487–509 (YMCTECGKSFSQKSPLIIHQRIH), 515–537 (YQCGECGKTFSQKSLLIIHLRVH), 543–565 (YECTECGRAFSLKSHLILHQRGH), and 571–593 (YECSECGKAFCGKSPLIIHQKTH). The segment at 599-621 (PECAESGMTFFWKSQMITYQRRH) adopts a C2H2-type 13; degenerate zinc-finger fold. The C2H2-type 14; degenerate zinc-finger motif lies at 627–649 (SRCSDCGKAFCQHVYFTGHQNPY).

The protein belongs to the krueppel C2H2-type zinc-finger protein family.

The protein localises to the nucleus. Functionally, may be involved in transcriptional regulation. This is Zinc finger protein 630 (ZNF630) from Homo sapiens (Human).